We begin with the raw amino-acid sequence, 220 residues long: Nucleoside diphosphate kinase, mitochondrial (220 aa).

The N-terminal 57 residues, 1 to 57 (MFSRFARAFPKILASGASQRTFATVQKAFANPTSKKLIVGSSLLIGSAFATTSFVAC), are a transit peptide targeting the mitochondrion. ATP-binding residues include Lys80, Phe128, Arg156, Thr162, Arg173, and Asn183. Residue His186 is the Pros-phosphohistidine intermediate of the active site.

This sequence belongs to the NDK family. Mg(2+) is required as a cofactor.

The protein resides in the mitochondrion intermembrane space. The enzyme catalyses a 2'-deoxyribonucleoside 5'-diphosphate + ATP = a 2'-deoxyribonucleoside 5'-triphosphate + ADP. It catalyses the reaction a ribonucleoside 5'-diphosphate + ATP = a ribonucleoside 5'-triphosphate + ADP. Its function is as follows. Major role in the synthesis of nucleoside triphosphates other than ATP. The ATP gamma phosphate is transferred to the NDP beta phosphate via a ping-pong mechanism, using a phosphorylated active-site intermediate. The chain is Nucleoside diphosphate kinase, mitochondrial (ndkM) from Dictyostelium discoideum (Social amoeba).